Here is a 201-residue protein sequence, read N- to C-terminus: Large ribosomal subunit protein uL4 (201 aa).

The segment at 45-72 is disordered; sequence AQKTRAEVTGSGKKPWRQKGTGRARAGS.

The protein belongs to the universal ribosomal protein uL4 family. As to quaternary structure, part of the 50S ribosomal subunit.

Its function is as follows. One of the primary rRNA binding proteins, this protein initially binds near the 5'-end of the 23S rRNA. It is important during the early stages of 50S assembly. It makes multiple contacts with different domains of the 23S rRNA in the assembled 50S subunit and ribosome. Functionally, forms part of the polypeptide exit tunnel. This Shewanella baltica (strain OS223) protein is Large ribosomal subunit protein uL4.